A 556-amino-acid polypeptide reads, in one-letter code: Formate--tetrahydrofolate ligase (556 aa).

Position 65-72 (65-72 (TPAGEGKS)) interacts with ATP.

This sequence belongs to the formate--tetrahydrofolate ligase family.

It catalyses the reaction (6S)-5,6,7,8-tetrahydrofolate + formate + ATP = (6R)-10-formyltetrahydrofolate + ADP + phosphate. The protein operates within one-carbon metabolism; tetrahydrofolate interconversion. The polypeptide is Formate--tetrahydrofolate ligase (Streptococcus mutans serotype c (strain ATCC 700610 / UA159)).